The sequence spans 474 residues: tRNA-2-methylthio-N(6)-dimethylallyladenosine synthase (474 aa).

The MTTase N-terminal domain occupies 3–120 (QKLHIKTWGC…LPEMINQIRG (118 aa)). Residues cysteine 12, cysteine 49, cysteine 83, cysteine 157, cysteine 161, and cysteine 164 each coordinate [4Fe-4S] cluster. The Radical SAM core domain occupies 143-375 (KAEGPTAFVS…QQRINNQAAK (233 aa)). The 64-residue stretch at 378 to 441 (RAMLGTEQRV…TNSLRGDVIR (64 aa)) folds into the TRAM domain.

The protein belongs to the methylthiotransferase family. MiaB subfamily. As to quaternary structure, monomer. [4Fe-4S] cluster serves as cofactor.

The protein localises to the cytoplasm. It catalyses the reaction N(6)-dimethylallyladenosine(37) in tRNA + (sulfur carrier)-SH + AH2 + 2 S-adenosyl-L-methionine = 2-methylsulfanyl-N(6)-dimethylallyladenosine(37) in tRNA + (sulfur carrier)-H + 5'-deoxyadenosine + L-methionine + A + S-adenosyl-L-homocysteine + 2 H(+). Catalyzes the methylthiolation of N6-(dimethylallyl)adenosine (i(6)A), leading to the formation of 2-methylthio-N6-(dimethylallyl)adenosine (ms(2)i(6)A) at position 37 in tRNAs that read codons beginning with uridine. In Actinobacillus succinogenes (strain ATCC 55618 / DSM 22257 / CCUG 43843 / 130Z), this protein is tRNA-2-methylthio-N(6)-dimethylallyladenosine synthase.